The following is a 311-amino-acid chain: Cyclin-dependent kinase B1-2 (311 aa).

The region spanning 4–303 (YEKLEKVGEG…AKAALDHPYF (300 aa)) is the Protein kinase domain. Residues 10 to 18 (VGEGTYGKV) and Lys-33 each bind ATP. Tyr-15 is subject to Phosphotyrosine. Catalysis depends on Asp-144, which acts as the Proton acceptor. Thr-178 is modified (phosphothreonine).

This sequence belongs to the protein kinase superfamily. CMGC Ser/Thr protein kinase family. CDC2/CDKX subfamily. In terms of assembly, interacts with CKS1. As to expression, expressed in flowers.

It carries out the reaction L-seryl-[protein] + ATP = O-phospho-L-seryl-[protein] + ADP + H(+). The enzyme catalyses L-threonyl-[protein] + ATP = O-phospho-L-threonyl-[protein] + ADP + H(+). It catalyses the reaction [DNA-directed RNA polymerase] + ATP = phospho-[DNA-directed RNA polymerase] + ADP + H(+). In terms of biological role, together with CDKB1-1, promotes both the last division in the stomatal cell lineage as well as the number of stomata. In collaboration with MYB124 and MYB88, restrict the G1/S transition and chloroplast and nuclear number during stomatal formation, and normally maintain fate and developmental progression throughout the stomatal cell lineage. This is Cyclin-dependent kinase B1-2 (CDKB1-2) from Arabidopsis thaliana (Mouse-ear cress).